The following is a 381-amino-acid chain: Creatine kinase M-type (381 aa).

Residues 11 to 98 enclose the Phosphagen kinase N-terminal domain; sequence KLNYKPEEEY…FDPIISDRHG (88 aa). A Phosphagen kinase C-terminal domain is found at 125–367; that stretch reads YVLSSRVRTG…KLMVEMEKKL (243 aa). Position 128–132 (128–132) interacts with ATP; that stretch reads SSRVR. The residue at position 164 (S164) is a Phosphoserine. T166 is modified (phosphothreonine). At S178 the chain carries Phosphoserine. T180 bears the Phosphothreonine mark. Residue H191 participates in ATP binding. Residue S199 is modified to Phosphoserine. ATP-binding residues include R236 and R292. T313 and T322 each carry phosphothreonine. Residues 320–325 and D335 each bind ATP; that span reads RGTGGV. S372 is subject to Phosphoserine.

This sequence belongs to the ATP:guanido phosphotransferase family. In terms of assembly, dimer of identical or non-identical chains, which can be either B (brain type) or M (muscle type). With MM being the major form in skeletal muscle and myocardium, MB existing in myocardium, and BB existing in many tissues, especially brain.

It is found in the cytoplasm. The enzyme catalyses creatine + ATP = N-phosphocreatine + ADP + H(+). Reversibly catalyzes the transfer of phosphate between ATP and various phosphogens (e.g. creatine phosphate). Creatine kinase isoenzymes play a central role in energy transduction in tissues with large, fluctuating energy demands, such as skeletal muscle, heart, brain and spermatozoa. The sequence is that of Creatine kinase M-type (CKM) from Homo sapiens (Human).